The chain runs to 372 residues: Envelope phospholipase OPG057 (372 aa).

The YPPL motif lies at 153–156; sequence YPPL. Residues Cys185 and Cys186 are each lipidated (S-palmitoyl cysteine; by host). Residues 307–334 form the PLD phosphodiesterase domain; the sequence is FTIQNNTKLLIVDDEYVHITSANFDGTH.

Belongs to the orthopoxvirus OPG057 family. In terms of assembly, interacts with protein OPG190. In terms of processing, palmitoylated. Attachment of the palmitate moiety is essential for correct intracellular targeting and protein function.

The protein resides in the virion membrane. It is found in the host Golgi apparatus. Its subcellular location is the host trans-Golgi network. It localises to the host endoplasmic reticulum membrane. It catalyses the reaction a 1,2-diacyl-sn-glycero-3-phosphocholine + H2O = a 1,2-diacyl-sn-glycero-3-phosphate + choline + H(+). Functionally, major envelope protein that plays a role in the biogenesis of the viral double membrane and in egress of virus from the host cell. Produces the wrapped form of virus that is required for cell-to-cell spread. Acts as a lipase with broad specificity including phospholipase C, phospholipase A, and triacylglycerol lipase activities. This is Envelope phospholipase OPG057 (OPG057) from Variola virus (isolate Human/India/Ind3/1967) (VARV).